Consider the following 464-residue polypeptide: Delta(5) fatty acid desaturase A (464 aa).

A Cytochrome b5 heme-binding domain is found at 13-90 (GKQYSWSELA…LKNYEIGYIS (78 aa)). Heme is bound by residues His48 and His71. 2 helical membrane-spanning segments follow: residues 125–145 (AVSI…TYYL) and 153–173 (FYLN…FSMH). Positions 176-180 (HDSCH) match the Histidine box-1 motif. Positions 212-217 (HVIGHH) match the Histidine box-2 motif. A helical membrane pass occupies residues 318–338 (FTDLICYFLIAEFVFGWYLTI). Residues 396–400 (QVVHH) carry the Histidine box-3 motif.

It belongs to the fatty acid desaturase type 1 family. Requires Fe cation as cofactor.

Its subcellular location is the membrane. Functionally, specific for desaturation of the 5 position in C16 and C18 fatty acids. The polypeptide is Delta(5) fatty acid desaturase A (fadA) (Dictyostelium discoideum (Social amoeba)).